The chain runs to 112 residues: uncharacterized protein (112 aa).

It is found in the plastid. The protein localises to the chloroplast. This is an uncharacterized protein from Chlamydomonas reinhardtii (Chlamydomonas smithii).